A 380-amino-acid chain; its full sequence is MVQWKHAALLALALAVVGCSSNSKKELPPAELTDFKEEVVLSKQWSRSVGDGQGDLYNLLEPAVDGSTIYAASAEGRVMAIQRETGDVLWKKDLERPVSGGVGVGYGLVLVGTLRGDVIALDEATGKKKWTKRVNSEVLSAPATNGDVVVVQTQDDKLIGLDAASGDQRWIYESTVPVLTLRGTGAPLIAGNMALAGLASGKVVAVDVQRGLPIWEQRVAIPQGRSELDRVVDIDGGLLLSGDTLYVVSYQGRAAALDVNSGRLLWQREASSYVGVAEGFGNIYVSQASGSVEGLDSRGASSLWNNDALARRQLSAPAVFSSNVVVGDLEGYVHLLSQVDGRFVGRERVDSDGVRVRPLVVGSWMYVFGNGGKLVAYTIR.

A signal peptide spans 1 to 18; that stretch reads MVQWKHAALLALALAVVG. Cys-19 carries N-palmitoyl cysteine lipidation. Residue Cys-19 is the site of S-diacylglycerol cysteine attachment.

This sequence belongs to the BamB family. In terms of assembly, part of the Bam complex.

It localises to the cell outer membrane. Its function is as follows. Part of the outer membrane protein assembly complex, which is involved in assembly and insertion of beta-barrel proteins into the outer membrane. The protein is Outer membrane protein assembly factor BamB of Pseudomonas aeruginosa (strain ATCC 15692 / DSM 22644 / CIP 104116 / JCM 14847 / LMG 12228 / 1C / PRS 101 / PAO1).